The primary structure comprises 354 residues: uncharacterized protein (354 aa).

Over residues 309–326 (VNSANSINTANTRSQTGG) the composition is skewed to polar residues. The interval 309–333 (VNSANSINTANTRSQTGGQDEEDFE) is disordered. Residues 326–353 (GQDEEDFEKKYKKYKNKYAKLKNQKTSN) are a coiled coil.

Its subcellular location is the virion. This is an uncharacterized protein from Acanthamoeba polyphaga (Amoeba).